The following is a 532-amino-acid chain: Putative 57 kDa heat shock protein (532 aa).

SHSP domains are found at residues 25 to 134 and 439 to 532; these read VNGP…CKIT and SVLE…IPSN.

This sequence belongs to the small heat shock protein (HSP20) family.

The polypeptide is Putative 57 kDa heat shock protein (Arabidopsis thaliana (Mouse-ear cress)).